Consider the following 396-residue polypeptide: Anhydro-N-acetylmuramic acid kinase (396 aa).

Residue 19–26 (GTSADGID) coordinates ATP.

It belongs to the anhydro-N-acetylmuramic acid kinase family.

The catalysed reaction is 1,6-anhydro-N-acetyl-beta-muramate + ATP + H2O = N-acetyl-D-muramate 6-phosphate + ADP + H(+). It participates in amino-sugar metabolism; 1,6-anhydro-N-acetylmuramate degradation. Its pathway is cell wall biogenesis; peptidoglycan recycling. Functionally, catalyzes the specific phosphorylation of 1,6-anhydro-N-acetylmuramic acid (anhMurNAc) with the simultaneous cleavage of the 1,6-anhydro ring, generating MurNAc-6-P. Is required for the utilization of anhMurNAc either imported from the medium or derived from its own cell wall murein, and thus plays a role in cell wall recycling. This is Anhydro-N-acetylmuramic acid kinase from Colwellia psychrerythraea (strain 34H / ATCC BAA-681) (Vibrio psychroerythus).